The following is a 1138-amino-acid chain: Lysylphosphatidylglycerol biosynthesis bifunctional protein LysX (1138 aa).

A compositionally biased stretch (polar residues) spans 1–15 (MALDTPSSDLPVSTD). Positions 1–34 (MALDTPSSDLPVSTDDTAEHQPTPAHRPPSAADR) are disordered. Positions 1 to 646 (MALDTPSSDL…LIAQLESEED (646 aa)) are phosphatidylglycerol lysyltransferase. Helical transmembrane passes span 56–76 (IAGTVVGVLAGIALLSSIFPL), 92–112 (IVSLPNTSLAWAFVLALVAIA), 119–139 (IAWWIATIYLVLFMVSNALLL), 155–175 (IQIWIGLGIDAAALIFLIVTY), 190–210 (ALGVLIVGLTAATLVGWGLVW), and 247–267 (IVIDSALGLLGALALIAAATV). Residues 647–1138 (RTAVEVHRPE…AFPMVKPTDA (492 aa)) form a lysine--tRNA ligase region. A DNA-binding region (OB) is located at residues 698-772 (VTIAGRVTKM…GELSVLIDAW (75 aa)). Mg(2+) contacts are provided by Asp-1048 and Glu-1055.

This sequence in the N-terminal section; belongs to the LPG synthetase family. In the C-terminal section; belongs to the class-II aminoacyl-tRNA synthetase family. The cofactor is Mg(2+).

The protein localises to the cell membrane. The enzyme catalyses tRNA(Lys) + L-lysine + ATP = L-lysyl-tRNA(Lys) + AMP + diphosphate. The catalysed reaction is L-lysyl-tRNA(Lys) + a 1,2-diacyl-sn-glycero-3-phospho-(1'-sn-glycerol) = a 1,2-diacyl-sn-glycero-3-phospho-1'-(3'-O-L-lysyl)-sn-glycerol + tRNA(Lys). In terms of biological role, catalyzes the production of L-lysyl-tRNA(Lys)transfer and the transfer of a lysyl group from L-lysyl-tRNA(Lys) to membrane-bound phosphatidylglycerol (PG), which produces lysylphosphatidylglycerol (LPG), one of the components of the bacterial membrane with a positive net charge. LPG synthesis contributes to the resistance to cationic antimicrobial peptides (CAMPs) and likely protects M.tuberculosis against the CAMPs produced by competiting microorganisms (bacteriocins). In fact, the modification of anionic phosphatidylglycerol with positively charged L-lysine results in repulsion of the peptides. The protein is Lysylphosphatidylglycerol biosynthesis bifunctional protein LysX (lysX) of Gordonia bronchialis (strain ATCC 25592 / DSM 43247 / BCRC 13721 / JCM 3198 / KCTC 3076 / NBRC 16047 / NCTC 10667) (Rhodococcus bronchialis).